The sequence spans 292 residues: tRNA pseudouridine synthase B (292 aa).

Aspartate 38 functions as the Nucleophile in the catalytic mechanism.

It belongs to the pseudouridine synthase TruB family. Type 1 subfamily.

The catalysed reaction is uridine(55) in tRNA = pseudouridine(55) in tRNA. Its function is as follows. Responsible for synthesis of pseudouridine from uracil-55 in the psi GC loop of transfer RNAs. The chain is tRNA pseudouridine synthase B from Gloeobacter violaceus (strain ATCC 29082 / PCC 7421).